The primary structure comprises 316 residues: N-acetyl-gamma-glutamyl-phosphate reductase (316 aa).

Cysteine 136 is an active-site residue.

Belongs to the NAGSA dehydrogenase family. Type 1 subfamily.

It localises to the cytoplasm. It carries out the reaction N-acetyl-L-glutamate 5-semialdehyde + phosphate + NADP(+) = N-acetyl-L-glutamyl 5-phosphate + NADPH + H(+). It functions in the pathway amino-acid biosynthesis; L-arginine biosynthesis; N(2)-acetyl-L-ornithine from L-glutamate: step 3/4. In terms of biological role, catalyzes the NADPH-dependent reduction of N-acetyl-5-glutamyl phosphate to yield N-acetyl-L-glutamate 5-semialdehyde. This Xanthomonas euvesicatoria pv. vesicatoria (strain 85-10) (Xanthomonas campestris pv. vesicatoria) protein is N-acetyl-gamma-glutamyl-phosphate reductase.